The following is a 587-amino-acid chain: MESNGGGGGSPKEAAVVVPSSGDATLGGHLARRLVQVGVSDVFAVPGDFNLTLLDHLIAEPGLRVVGCCNELNAGYAADGYARARGVGACAVTFTVGGLSVLNAIGGAYSENLPLICIVGGPNSNDYGTNRILHHTIGLPDFSQELRCFQPLTCYQAVVNNLDDAHDQIDRAISTAIRESKPVYISVSCNLPAVPHPTFSRDPVPYFLSPRLSNQASLHAALDATLAFLDKAVKPVLVAGPKLRVAKAGGAFVDLADASGYAVAAMPSAKGLVPETLPRFIGTYWGAVSTAFCAEIVESADAYLFAGPIFNDYSSVGYSCLLKKEKAVVVQPDRVTVGNGPAFGCVMMRDFLSELAKRVRKNTTAFDNYKRIFVPEGQLPECEAGEALRVNVLFKHIQRMIGGAEIGAVMAETGDSWFNCQKLRLPEGCGYEFQMQYGSIGWSVGALLGYAQAVQKRVVACIGDGSFQVTAQDVSTMLRCGQRSIIFLINNGGYTIEVEIHDGPYNVIKNWDYVGLVNAIHNGEGRCWATRVRCEEELEAAIATATGDKADSLCFIEVVAHKDDTSKELLEWGSRVSAANSRPPNPQ.

Positions 48 and 135 each coordinate substrate. The thiamine pyrophosphate binding stretch occupies residues Asp415 to Ile496. Mg(2+) contacts are provided by Asp464, Asn491, and Gly493. Glu497 contributes to the substrate binding site.

This sequence belongs to the TPP enzyme family. As to quaternary structure, homotetramer. A metal cation serves as cofactor. Thiamine diphosphate is required as a cofactor.

It carries out the reaction a 2-oxocarboxylate + H(+) = an aldehyde + CO2. The protein is Pyruvate decarboxylase 3 (PDC3) of Oryza sativa subsp. indica (Rice).